The primary structure comprises 127 residues: Large ribosomal subunit protein bL17 (127 aa).

Belongs to the bacterial ribosomal protein bL17 family. As to quaternary structure, part of the 50S ribosomal subunit. Contacts protein L32.

In Photobacterium profundum (strain SS9), this protein is Large ribosomal subunit protein bL17.